The following is a 122-amino-acid chain: Cytochrome c-556 (122 aa).

Heme-binding residues include Met11, Cys111, Cys114, and His115. Residues Met11, Cys111, Cys114, and His115 each coordinate heme c.

In terms of assembly, monomer. In terms of processing, binds 1 heme c group covalently per subunit.

Functionally, low-spin monoheme cytochrome c. The chain is Cytochrome c-556 from Agrobacterium tumefaciens (strain B2A).